A 493-amino-acid chain; its full sequence is Cysteine sulfinic acid decarboxylase (493 aa).

K305 carries the post-translational modification N6-(pyridoxal phosphate)lysine.

It belongs to the group II decarboxylase family. As to quaternary structure, homodimer. Pyridoxal 5'-phosphate serves as cofactor. Expressed in liver and brain. Also expressed in both astrocytes and neurons, but lower levels are expressed in astrocytes.

The enzyme catalyses L-aspartate + H(+) = beta-alanine + CO2. The catalysed reaction is 3-sulfino-L-alanine + H(+) = hypotaurine + CO2. It carries out the reaction L-cysteate + H(+) = taurine + CO2. It participates in organosulfur biosynthesis; taurine biosynthesis; hypotaurine from L-cysteine: step 2/2. In terms of biological role, catalyzes the decarboxylation of L-aspartate, 3-sulfino-L-alanine (cysteine sulfinic acid), and L-cysteate to beta-alanine, hypotaurine and taurine, respectively. The preferred substrate is 3-sulfino-L-alanine. Does not exhibit any decarboxylation activity toward glutamate. The sequence is that of Cysteine sulfinic acid decarboxylase (CSAD) from Homo sapiens (Human).